The primary structure comprises 588 residues: Putative ABC transporter ATP-binding protein PAM_020 (588 aa).

2 consecutive ABC transporter domains span residues 6 to 247 and 317 to 551; these read IIFK…GIQE and LQLQ…TSLN. ATP contacts are provided by residues 40–47 and 351–358; these read GKNGSGKS.

The protein belongs to the ABC transporter superfamily.

The protein localises to the cell membrane. Its function is as follows. Probably part of an ABC transporter complex. Responsible for energy coupling to the transport system. The polypeptide is Putative ABC transporter ATP-binding protein PAM_020 (Onion yellows phytoplasma (strain OY-M)).